A 930-amino-acid polypeptide reads, in one-letter code: Protocadherin gamma-B6 (930 aa).

A signal peptide spans 1–30 (MGGSCAQRRRAGPRQVLFPLLLPLFYPTLS). Cadherin domains follow at residues 31–133 (EPIR…APQF), 134–242 (DKKE…PPVF), 243–347 (SRDE…SPEI), 348–452 (IITS…APVF), 453–562 (DQTS…APRV), and 570–675 (DGSA…LPDL). The Extracellular segment spans residues 31–691 (EPIRYSIPEE…SDPQAELQFY (661 aa)). 3 N-linked (GlcNAc...) asparagine glycosylation sites follow: asparagine 304, asparagine 419, and asparagine 545. A helical transmembrane segment spans residues 692-712 (LVVALALISVLFLLAVILAIA). The Cytoplasmic segment spans residues 713-930 (LRLRRSLSPA…KKKSGKKEKK (218 aa)). 2 disordered regions span residues 791 to 839 (PHGG…WPNN) and 900 to 930 (ATLTNAAGKRDGKAPAGGNGNKKKSGKKEKK). Polar residues predominate over residues 800–839 (HPETLTSQAPPNTDWRFSQAQRPGTSGSQNGDDTGTWPNN). Residues 920 to 930 (NKKKSGKKEKK) are compositionally biased toward basic residues.

It localises to the cell membrane. Functionally, potential calcium-dependent cell-adhesion protein. May be involved in the establishment and maintenance of specific neuronal connections in the brain. The protein is Protocadherin gamma-B6 (PCDHGB6) of Homo sapiens (Human).